We begin with the raw amino-acid sequence, 863 residues long: Neuroligin-1 (863 aa).

The signal sequence occupies residues 1–45 (MALPRCTWPNYVWRAVMACLVHRGLGAPLTLCMLGCLLQAGHVLS). The Extracellular segment spans residues 46–717 (QKLDDVDPLV…DQRDYSTELS (672 aa)). Asparagine 109 carries N-linked (GlcNAc...) (complex) asparagine glycosylation. A disulfide bond links cysteine 117 and cysteine 153. The interval 183–212 (KGGPLTKKQTDDLGDNDGAEDEDIRDSGGP) is disordered. Residues 194-206 (DLGDNDGAEDEDI) show a composition bias toward acidic residues. Residues asparagine 323 and asparagine 363 are each glycosylated (N-linked (GlcNAc...) (complex) asparagine). Intrachain disulfides connect cysteine 362–cysteine 373 and cysteine 532–cysteine 566. Asparagine 567 carries an N-linked (GlcNAc...) asparagine glycan. The segment at 670–708 (PSTDITFRPTRKNSVPVTSAFPTAKQDDPKQQPSPFSVD) is disordered. Residues 681-690 (KNSVPVTSAF) show a composition bias toward polar residues. O-linked (GalNAc...) serine glycans are attached at residues serine 703 and serine 706. Residues 718 to 738 (VTIAVGASLLFLNILAFAALY) form a helical membrane-spanning segment. Residues 739-863 (YKKDKRRHDV…HPHSHSTTRV (125 aa)) lie on the Cytoplasmic side of the membrane. Residues 842-863 (GGQNNTLPHPHPHPHSHSTTRV) form a disordered region. Positions 851–863 (PHPHPHSHSTTRV) are enriched in basic residues.

Belongs to the type-B carboxylesterase/lipase family. As to quaternary structure, interacts with neurexins NRXN1, NRXN2 and NRXN3. Interaction with neurexins is mediated by heparan sulfate glycan modification on neurexin. Interacts with NLGN3. Interacts with AIP1 and PDZRN3. Interacts (via its C-terminus) with DLG4/PSD-95 (via PDZ domain 3). Interacts with GOPC. As to expression, expressed in the blood vessel walls (at protein level). Highly expressed in brain through prenatal stages, and at lower levels in pancreas islet beta cells.

It localises to the cell membrane. It is found in the postsynaptic density. The protein resides in the synaptic cleft. The protein localises to the synaptic cell membrane. In terms of biological role, cell surface protein involved in cell-cell-interactions via its interactions with neurexin family members. Plays a role in synapse function and synaptic signal transmission, and probably mediates its effects by recruiting and clustering other synaptic proteins. May promote the initial formation of synapses, but is not essential for this. In vitro, triggers the de novo formation of presynaptic structures. May be involved in specification of excitatory synapses. Required to maintain wakefulness quality and normal synchrony of cerebral cortex activity during wakefulness and sleep. The protein is involved in nervous system development. This chain is Neuroligin-1 (NLGN1), found in Homo sapiens (Human).